The chain runs to 493 residues: Alpha-amylase-related protein (493 aa).

An N-terminal signal peptide occupies residues 1–19 (MFKLALTLTLCLAGSLSLA). Gln20 carries the pyrrolidone carboxylic acid modification. Cys47 and Cys103 form a disulfide bridge. Residues Asn117, Gln168, and Asp177 each coordinate Ca(2+). Cys156 and Cys170 are disulfide-bonded. Residue Arg205 participates in chloride binding. Catalysis depends on Asp207, which acts as the Nucleophile. Residue His211 participates in Ca(2+) binding. Glu244 (proton donor) is an active-site residue. 2 residues coordinate chloride: Asn307 and Arg342. 3 disulfides stabilise this stretch: Cys375–Cys381, Cys417–Cys440, and Cys447–Cys459.

The protein belongs to the glycosyl hydrolase 13 family. In terms of assembly, monomer. It depends on Ca(2+) as a cofactor. Chloride serves as cofactor.

The protein localises to the secreted. It catalyses the reaction Endohydrolysis of (1-&gt;4)-alpha-D-glucosidic linkages in polysaccharides containing three or more (1-&gt;4)-alpha-linked D-glucose units.. The sequence is that of Alpha-amylase-related protein (Amyrel) from Drosophila teissieri (Fruit fly).